A 380-amino-acid polypeptide reads, in one-letter code: DNA replication and repair protein RecF (380 aa).

30-37 (GNNAQGKS) provides a ligand contact to ATP.

Belongs to the RecF family.

Its subcellular location is the cytoplasm. In terms of biological role, the RecF protein is involved in DNA metabolism; it is required for DNA replication and normal SOS inducibility. RecF binds preferentially to single-stranded, linear DNA. It also seems to bind ATP. The protein is DNA replication and repair protein RecF of Rippkaea orientalis (strain PCC 8801 / RF-1) (Cyanothece sp. (strain PCC 8801)).